The primary structure comprises 102 residues: Co-chaperonin GroES (102 aa).

Belongs to the GroES chaperonin family. In terms of assembly, heptamer of 7 subunits arranged in a ring. Interacts with the chaperonin GroEL.

It is found in the cytoplasm. Together with the chaperonin GroEL, plays an essential role in assisting protein folding. The GroEL-GroES system forms a nano-cage that allows encapsulation of the non-native substrate proteins and provides a physical environment optimized to promote and accelerate protein folding. GroES binds to the apical surface of the GroEL ring, thereby capping the opening of the GroEL channel. In Streptomyces avermitilis (strain ATCC 31267 / DSM 46492 / JCM 5070 / NBRC 14893 / NCIMB 12804 / NRRL 8165 / MA-4680), this protein is Co-chaperonin GroES.